A 163-amino-acid polypeptide reads, in one-letter code: Phosphopantetheine adenylyltransferase (163 aa).

T9 contributes to the substrate binding site. ATP-binding positions include 9–10 (TF) and H17. Substrate contacts are provided by K41, L76, and R90. Residues 91-93 (GLR), E101, and 126-132 (YSFISST) contribute to the ATP site.

Belongs to the bacterial CoaD family. Homohexamer. It depends on Mg(2+) as a cofactor.

It localises to the cytoplasm. The catalysed reaction is (R)-4'-phosphopantetheine + ATP + H(+) = 3'-dephospho-CoA + diphosphate. The protein operates within cofactor biosynthesis; coenzyme A biosynthesis; CoA from (R)-pantothenate: step 4/5. In terms of biological role, reversibly transfers an adenylyl group from ATP to 4'-phosphopantetheine, yielding dephospho-CoA (dPCoA) and pyrophosphate. This Dichelobacter nodosus (strain VCS1703A) protein is Phosphopantetheine adenylyltransferase.